A 256-amino-acid polypeptide reads, in one-letter code: Small ribosomal subunit protein eS1 (256 aa).

Positions Met1–Lys18 are enriched in basic residues. The segment at Met1–Thr20 is disordered. At Ala2 the chain carries N-acetylalanine; partial.

Belongs to the eukaryotic ribosomal protein eS1 family. Component of the small ribosomal subunit. Mature ribosomes consist of a small (40S) and a large (60S) subunit. The 40S subunit contains about 33 different proteins and 1 molecule of RNA (18S). The 60S subunit contains about 49 different proteins and 3 molecules of RNA (25S, 5.8S and 5S).

The protein localises to the cytoplasm. In Talaromyces marneffei (strain ATCC 18224 / CBS 334.59 / QM 7333) (Penicillium marneffei), this protein is Small ribosomal subunit protein eS1 (rps1).